The primary structure comprises 252 residues: Trans-aconitate 2-methyltransferase (252 aa).

It belongs to the methyltransferase superfamily. Tam family. Monomer.

The protein resides in the cytoplasm. It catalyses the reaction trans-aconitate + S-adenosyl-L-methionine = (E)-3-(methoxycarbonyl)pent-2-enedioate + S-adenosyl-L-homocysteine. In terms of biological role, catalyzes the S-adenosylmethionine monomethyl esterification of trans-aconitate at high affinity and of cis-aconitate, isocitrate, and citrate at lower velocities and affinities. This Escherichia coli O157:H7 protein is Trans-aconitate 2-methyltransferase (tam).